Reading from the N-terminus, the 286-residue chain is Ribose-phosphate pyrophosphokinase (286 aa).

ATP contacts are provided by residues 34–36 and 91–92; these read DGE and RQ. Mg(2+)-binding residues include H124 and D161. Residue K184 is part of the active site. D-ribose 5-phosphate is bound by residues R186, D210, and 214-218; that span reads STGGT.

It belongs to the ribose-phosphate pyrophosphokinase family. Class III (archaeal) subfamily. It depends on Mg(2+) as a cofactor.

The protein localises to the cytoplasm. The enzyme catalyses D-ribose 5-phosphate + ATP = 5-phospho-alpha-D-ribose 1-diphosphate + AMP + H(+). Its pathway is metabolic intermediate biosynthesis; 5-phospho-alpha-D-ribose 1-diphosphate biosynthesis; 5-phospho-alpha-D-ribose 1-diphosphate from D-ribose 5-phosphate (route I): step 1/1. In terms of biological role, involved in the biosynthesis of the central metabolite phospho-alpha-D-ribosyl-1-pyrophosphate (PRPP) via the transfer of pyrophosphoryl group from ATP to 1-hydroxyl of ribose-5-phosphate (Rib-5-P). The chain is Ribose-phosphate pyrophosphokinase from Thermoplasma acidophilum (strain ATCC 25905 / DSM 1728 / JCM 9062 / NBRC 15155 / AMRC-C165).